Reading from the N-terminus, the 1252-residue chain is ATP-dependent helicase/nuclease subunit A (1252 aa).

The UvrD-like helicase ATP-binding domain maps to 6 to 489; it reads TNWTEEQKEA…VLLYKNFRSR (484 aa). An ATP-binding site is contributed by 27 to 34; sequence AAAGSGKT. Residues 523 to 811 form the UvrD-like helicase C-terminal domain; that stretch reads ANYEEIEENL…RIMSIHKSKG (289 aa).

It belongs to the helicase family. AddA subfamily. Heterodimer of AddA and AddB/RexB. Requires Mg(2+) as cofactor.

The enzyme catalyses Couples ATP hydrolysis with the unwinding of duplex DNA by translocating in the 3'-5' direction.. The catalysed reaction is ATP + H2O = ADP + phosphate + H(+). Its function is as follows. The heterodimer acts as both an ATP-dependent DNA helicase and an ATP-dependent, dual-direction single-stranded exonuclease. Recognizes the chi site generating a DNA molecule suitable for the initiation of homologous recombination. The AddA nuclease domain is required for chi fragment generation; this subunit has the helicase and 3' -&gt; 5' nuclease activities. The chain is ATP-dependent helicase/nuclease subunit A from Clostridium acetobutylicum (strain ATCC 824 / DSM 792 / JCM 1419 / IAM 19013 / LMG 5710 / NBRC 13948 / NRRL B-527 / VKM B-1787 / 2291 / W).